A 229-amino-acid chain; its full sequence is Uracil-DNA glycosylase (229 aa).

Aspartate 64 serves as the catalytic Proton acceptor.

This sequence belongs to the uracil-DNA glycosylase (UDG) superfamily. UNG family.

Its subcellular location is the cytoplasm. It catalyses the reaction Hydrolyzes single-stranded DNA or mismatched double-stranded DNA and polynucleotides, releasing free uracil.. Functionally, excises uracil residues from the DNA which can arise as a result of misincorporation of dUMP residues by DNA polymerase or due to deamination of cytosine. This Salmonella arizonae (strain ATCC BAA-731 / CDC346-86 / RSK2980) protein is Uracil-DNA glycosylase.